The sequence spans 332 residues: RNA polymerase principal sigma factor HrdD (332 aa).

Positions 1-25 (MATRAVARRQSATGETADSASSVRA) are disordered. The span at 10 to 22 (QSATGETADSASS) shows a compositional bias: polar residues. The short motif at 124-137 (DLIQEGNAGLVRAV) is the Polymerase core binding element. Residues 294 to 313 (LTEVGKEHGLTRERIRQIEK) constitute a DNA-binding region (H-T-H motif).

Belongs to the sigma-70 factor family.

Its function is as follows. Sigma factors are initiation factors that promote the attachment of RNA polymerase to specific initiation sites and are then released. In Streptomyces viridifaciens, this protein is RNA polymerase principal sigma factor HrdD (hrdD).